Consider the following 92-residue polypeptide: Small ribosomal subunit protein uS19 (92 aa).

Belongs to the universal ribosomal protein uS19 family.

Functionally, protein S19 forms a complex with S13 that binds strongly to the 16S ribosomal RNA. In Anoxybacillus flavithermus (strain DSM 21510 / WK1), this protein is Small ribosomal subunit protein uS19.